We begin with the raw amino-acid sequence, 259 residues long: Ribosomal RNA small subunit methyltransferase J (259 aa).

Residues 107 to 108, 123 to 124, 159 to 160, and D177 each bind S-adenosyl-L-methionine; these read RD, ER, and SS.

This sequence belongs to the methyltransferase superfamily. RsmJ family.

The protein resides in the cytoplasm. The enzyme catalyses guanosine(1516) in 16S rRNA + S-adenosyl-L-methionine = N(2)-methylguanosine(1516) in 16S rRNA + S-adenosyl-L-homocysteine + H(+). In terms of biological role, specifically methylates the guanosine in position 1516 of 16S rRNA. The chain is Ribosomal RNA small subunit methyltransferase J from Shewanella loihica (strain ATCC BAA-1088 / PV-4).